Consider the following 175-residue polypeptide: NADH-quinone oxidoreductase subunit I 1 (175 aa).

4Fe-4S ferredoxin-type domains lie at L44–A74 and R90–D119. C54, C57, C60, C64, C99, C102, C105, and C109 together coordinate [4Fe-4S] cluster.

Belongs to the complex I 23 kDa subunit family. In terms of assembly, NDH-1 is composed of 14 different subunits. Subunits NuoA, H, J, K, L, M, N constitute the membrane sector of the complex. It depends on [4Fe-4S] cluster as a cofactor.

It is found in the cell membrane. It carries out the reaction a quinone + NADH + 5 H(+)(in) = a quinol + NAD(+) + 4 H(+)(out). Functionally, NDH-1 shuttles electrons from NADH, via FMN and iron-sulfur (Fe-S) centers, to quinones in the respiratory chain. The immediate electron acceptor for the enzyme in this species is believed to be menaquinone. Couples the redox reaction to proton translocation (for every two electrons transferred, four hydrogen ions are translocated across the cytoplasmic membrane), and thus conserves the redox energy in a proton gradient. In Mycolicibacterium paratuberculosis (strain ATCC BAA-968 / K-10) (Mycobacterium paratuberculosis), this protein is NADH-quinone oxidoreductase subunit I 1.